The following is a 201-amino-acid chain: Regulator of G-protein signaling 1 (201 aa).

The RGS domain maps to 75 to 191 (SLEKLLISED…LKSEIFLRLA (117 aa)).

It is found in the cell membrane. It localises to the cytoplasm. The protein localises to the cytosol. Its function is as follows. Regulates G protein-coupled receptor signaling cascades, including signaling downstream of the N-formylpeptide chemoattractant receptors and leukotriene receptors. Inhibits B cell chemotaxis. Inhibits signal transduction by increasing the GTPase activity of G protein alpha subunits, thereby driving them into their inactive GDP-bound form. The protein is Regulator of G-protein signaling 1 (rgs1) of Xenopus tropicalis (Western clawed frog).